Consider the following 338-residue polypeptide: MENLDALVSQALEAVERAEDINALEQIRVNYLGKKGELTQVMKTLGNLPAEERPKVGALINDAKERVTVVLNARKAAFEEAELSARLAAECIDVTLPGRGQATGGLHPITRTLERIEQFFTHIGYGIAEGPEVEDDYHNFEALNIPGHHPARAMHDTFYFNANMLLRTHTSPVQVRTMESTQPPIRIVCPGRVYRCDSDITHSPMFHQVEGLLIDRDINFADLKGTIEEFLRVFFEKELAVRFRPSFFPFTEPSAEVDIQCVMCSGNGCRVCKQTGWLEVMGCGMVHPNVLRMSGIDPEEFQGFAFGMGAERLAMLRYGVNDLRLFFDNDLRFLAQFR.

Residue glutamate 252 coordinates Mg(2+).

This sequence belongs to the class-II aminoacyl-tRNA synthetase family. Phe-tRNA synthetase alpha subunit type 1 subfamily. As to quaternary structure, tetramer of two alpha and two beta subunits. Mg(2+) serves as cofactor.

Its subcellular location is the cytoplasm. It carries out the reaction tRNA(Phe) + L-phenylalanine + ATP = L-phenylalanyl-tRNA(Phe) + AMP + diphosphate + H(+). The protein is Phenylalanine--tRNA ligase alpha subunit of Pseudomonas putida (strain ATCC 700007 / DSM 6899 / JCM 31910 / BCRC 17059 / LMG 24140 / F1).